The chain runs to 112 residues: UPF0482 protein Ent638_1930 (112 aa).

Positions 1-27 (MTTLRKRLCLATLLSLTALAFTAPVSA) are cleaved as a signal peptide.

Belongs to the UPF0482 family.

In Enterobacter sp. (strain 638), this protein is UPF0482 protein Ent638_1930.